Reading from the N-terminus, the 185-residue chain is MKTAQELRVGNVVMVGKDPLVVQKTEYNKSGRNAAVVKLKFKNLLTGSASESVYKADEKFDIVMLERKECTYSYFGDPMYVFMDADYNQYEIEADSMGDALNYLEEAMPVEVVFYDGRAISVELPTILVREITYTEPAVRGDTSGKVLKPAKINTGYELQVPLFCAIGDKIEIDTRTNEYRSRVN.

It belongs to the elongation factor P family.

It localises to the cytoplasm. It functions in the pathway protein biosynthesis; polypeptide chain elongation. Involved in peptide bond synthesis. Stimulates efficient translation and peptide-bond synthesis on native or reconstituted 70S ribosomes in vitro. Probably functions indirectly by altering the affinity of the ribosome for aminoacyl-tRNA, thus increasing their reactivity as acceptors for peptidyl transferase. This is Elongation factor P from Bordetella avium (strain 197N).